The primary structure comprises 409 residues: NADH-quinone oxidoreductase subunit D (409 aa).

It belongs to the complex I 49 kDa subunit family. In terms of assembly, NDH-1 is composed of 14 different subunits. Subunits NuoB, C, D, E, F, and G constitute the peripheral sector of the complex.

The protein localises to the cell inner membrane. The catalysed reaction is a quinone + NADH + 5 H(+)(in) = a quinol + NAD(+) + 4 H(+)(out). Its function is as follows. NDH-1 shuttles electrons from NADH, via FMN and iron-sulfur (Fe-S) centers, to quinones in the respiratory chain. The immediate electron acceptor for the enzyme in this species is believed to be ubiquinone. Couples the redox reaction to proton translocation (for every two electrons transferred, four hydrogen ions are translocated across the cytoplasmic membrane), and thus conserves the redox energy in a proton gradient. The protein is NADH-quinone oxidoreductase subunit D of Helicobacter hepaticus (strain ATCC 51449 / 3B1).